The chain runs to 233 residues: Proteasome subunit alpha (233 aa).

The protein belongs to the peptidase T1A family. As to quaternary structure, the 20S proteasome core is composed of 14 alpha and 14 beta subunits that assemble into four stacked heptameric rings, resulting in a barrel-shaped structure. The two inner rings, each composed of seven catalytic beta subunits, are sandwiched by two outer rings, each composed of seven alpha subunits. The catalytic chamber with the active sites is on the inside of the barrel. Has a gated structure, the ends of the cylinder being occluded by the N-termini of the alpha-subunits. Is capped at one or both ends by the proteasome regulatory ATPase, PAN. In terms of processing, the N-terminus is blocked.

It localises to the cytoplasm. With respect to regulation, the formation of the proteasomal ATPase PAN-20S proteasome complex, via the docking of the C-termini of PAN into the intersubunit pockets in the alpha-rings, triggers opening of the gate for substrate entry. Interconversion between the open-gate and close-gate conformations leads to a dynamic regulation of the 20S proteasome proteolysis activity. Functionally, component of the proteasome core, a large protease complex with broad specificity involved in protein degradation. The T.acidophilum proteasome is able to cleave oligopeptides after Tyr, Leu, Phe, and to a lesser extent after Glu and Arg. Thus, displays chymotrypsin-like activity and low level of caspase-like and trypsin-like activities. The protein is Proteasome subunit alpha of Thermoplasma acidophilum (strain ATCC 25905 / DSM 1728 / JCM 9062 / NBRC 15155 / AMRC-C165).